The chain runs to 946 residues: Increased sodium tolerance protein 2 (946 aa).

At 1–121 the chain is on the cytoplasmic side; the sequence is MSQTITSLDP…SNLTNNPKQS (121 aa). Residues 122 to 142 form a helical membrane-spanning segment; the sequence is LYFAFLQNYIKWLIPFSFFGL. Residues 143-153 lie on the Extracellular side of the membrane; it reads SIRFLSNFTYE. A helical transmembrane segment spans residues 154–174; sequence FNSTYSLFAILWTLSFTAFWL. The Cytoplasmic portion of the chain corresponds to 175–217; that stretch reads YKYEPFWSDRLSKYSSFSTIEFLQDKQKAQKKASSVIMLKKCC. A helical membrane pass occupies residues 218–238; sequence FIPVALLFGAILLSFQLYCFA. The Extracellular portion of the chain corresponds to 239-253; sequence LEIFIKQIYNGPMIS. A helical membrane pass occupies residues 254-274; that stretch reads ILSFLPTILICTFTPVLTVIY. Topologically, residues 275 to 302 are cytoplasmic; that stretch reads NKYFVEPMTKWENHSSVVNAKKSKEAKN. Residues 303–323 traverse the membrane as a helical segment; it reads FVIIFLSSYVPLLITLFLYLP. The Extracellular segment spans residues 324–447; it reads MGHLLTAEIR…DANFKKLLLQ (124 aa). Residues 448–468 traverse the membrane as a helical segment; it reads FGYLVMFSTIWPLAPFICLIV. Residues 469 to 505 are Cytoplasmic-facing; the sequence is NLIVYQVDLRKAVLYSKPEYFPFPIYDKPSSVSNTQK. Residues 506–526 form a helical membrane-spanning segment; sequence LTVGLWNSVLVMFSILGCVIT. Over 527–563 the chain is Extracellular; it reads ATLTYMYQSCNIPGVGAHTSIHTNKAWYLANPINHSW. A helical transmembrane segment spans residues 564-584; sequence INIVLYAVFIEHVSVAIFFLF. Residues 585 to 946 are Cytoplasmic-facing; sequence SSILKSSHDD…GLLHKLKKKL (362 aa). 2 disordered regions span residues 617 to 638 and 665 to 718; these read EKIP…RKGS and THAN…TEKR. The span at 628-638 shows a compositional bias: basic and acidic residues; sequence NEKELVQRKGS. Ser-638 is modified (phosphoserine). A compositionally biased stretch (low complexity) spans 671–689; the sequence is PSSLSSASSPSLSSSSSSS. Residue Thr-701 is modified to Phosphothreonine. Phosphoserine occurs at positions 704 and 720. Thr-726 bears the Phosphothreonine mark. Residue Ser-729 is modified to Phosphoserine. Tyr-730 bears the Phosphotyrosine mark. Ser-757 carries the post-translational modification Phosphoserine. Residues 759 to 784 are disordered; that stretch reads RDAKSSAESSNATNNNTLGTESKLLP. Positions 764 to 775 are enriched in low complexity; that stretch reads SAESSNATNNNT. A phosphoserine mark is found at Ser-793, Ser-844, and Ser-847. The tract at residues 846–946 is disordered; that stretch reads VSVATEQTKK…GLLHKLKKKL (101 aa). A Phosphothreonine modification is found at Thr-850. The span at 859 to 868 shows a compositional bias: polar residues; that stretch reads STKNGPSRSI. A compositionally biased stretch (low complexity) spans 884–893; the sequence is TTTTTTTDAT. Positions 895–905 are enriched in basic residues; the sequence is PHHHHHHHRHR. Positions 916 to 927 are enriched in low complexity; it reads SKTTESSSSSSA. The segment covering 931 to 946 has biased composition (basic residues); the sequence is KPKHKKGLLHKLKKKL.

In terms of assembly, interacts with BTN2.

Its subcellular location is the cell membrane. In terms of biological role, may be involved in ion homeostasis together with BTN1 or BTN2. In Saccharomyces cerevisiae (strain ATCC 204508 / S288c) (Baker's yeast), this protein is Increased sodium tolerance protein 2 (IST2).